The chain runs to 373 residues: Dual-specificity RNA methyltransferase RlmN (373 aa).

Residue glutamate 94 is the Proton acceptor of the active site. The Radical SAM core domain occupies 100-339 (EDDRATLCVS…VIVRKTRGDD (240 aa)). Cysteine 107 and cysteine 344 form a disulfide bridge. Cysteine 114, cysteine 118, and cysteine 121 together coordinate [4Fe-4S] cluster. S-adenosyl-L-methionine is bound by residues 168-169 (GE), serine 200, 222-224 (SIH), and asparagine 301. Catalysis depends on cysteine 344, which acts as the S-methylcysteine intermediate.

This sequence belongs to the radical SAM superfamily. RlmN family. [4Fe-4S] cluster serves as cofactor.

The protein localises to the cytoplasm. It carries out the reaction adenosine(2503) in 23S rRNA + 2 reduced [2Fe-2S]-[ferredoxin] + 2 S-adenosyl-L-methionine = 2-methyladenosine(2503) in 23S rRNA + 5'-deoxyadenosine + L-methionine + 2 oxidized [2Fe-2S]-[ferredoxin] + S-adenosyl-L-homocysteine. The enzyme catalyses adenosine(37) in tRNA + 2 reduced [2Fe-2S]-[ferredoxin] + 2 S-adenosyl-L-methionine = 2-methyladenosine(37) in tRNA + 5'-deoxyadenosine + L-methionine + 2 oxidized [2Fe-2S]-[ferredoxin] + S-adenosyl-L-homocysteine. Specifically methylates position 2 of adenine 2503 in 23S rRNA and position 2 of adenine 37 in tRNAs. m2A2503 modification seems to play a crucial role in the proofreading step occurring at the peptidyl transferase center and thus would serve to optimize ribosomal fidelity. The sequence is that of Dual-specificity RNA methyltransferase RlmN from Shewanella sp. (strain MR-4).